Here is a 160-residue protein sequence, read N- to C-terminus: Large ribosomal subunit protein uL22c (160 aa).

Belongs to the universal ribosomal protein uL22 family. As to quaternary structure, part of the 50S ribosomal subunit.

The protein localises to the plastid. It is found in the chloroplast. This protein binds specifically to 23S rRNA. Its function is as follows. The globular domain of the protein is located near the polypeptide exit tunnel on the outside of the subunit, while an extended beta-hairpin is found that lines the wall of the exit tunnel in the center of the 70S ribosome. The polypeptide is Large ribosomal subunit protein uL22c (rpl22) (Capsella bursa-pastoris (Shepherd's purse)).